Consider the following 315-residue polypeptide: Sulfate adenylyltransferase subunit 2 1 (315 aa).

Residues 287 to 315 (DSSSSERQGRAIDHDQSGSMERKKREGYF) are disordered. Basic and acidic residues predominate over residues 293 to 315 (RQGRAIDHDQSGSMERKKREGYF).

The protein belongs to the PAPS reductase family. CysD subfamily. In terms of assembly, heterodimer composed of CysD, the smaller subunit, and CysN.

The catalysed reaction is sulfate + ATP + H(+) = adenosine 5'-phosphosulfate + diphosphate. It participates in sulfur metabolism; hydrogen sulfide biosynthesis; sulfite from sulfate: step 1/3. Its function is as follows. With CysN forms the ATP sulfurylase (ATPS) that catalyzes the adenylation of sulfate producing adenosine 5'-phosphosulfate (APS) and diphosphate, the first enzymatic step in sulfur assimilation pathway. APS synthesis involves the formation of a high-energy phosphoric-sulfuric acid anhydride bond driven by GTP hydrolysis by CysN coupled to ATP hydrolysis by CysD. In Alkalilimnicola ehrlichii (strain ATCC BAA-1101 / DSM 17681 / MLHE-1), this protein is Sulfate adenylyltransferase subunit 2 1.